Consider the following 240-residue polypeptide: Transmembrane emp24 domain-containing protein 6 (240 aa).

Positions 1-21 (MSPLLFGAGLVVLNLVTSARS) are cleaved as a signal peptide. Over 22 to 200 (QKTEPLSGSG…FFLIQSNYNY (179 aa)) the chain is Lumenal. Residues 53 to 138 (TECFWQFAHQ…SVQVYLNFGV (86 aa)) form the GOLD domain. N-linked (GlcNAc...) asparagine glycosylation is found at asparagine 107 and asparagine 156. The chain crosses the membrane as a helical span at residues 201–223 (VNWWSTAQSLVIILSGILQLYFL). The Cytoplasmic portion of the chain corresponds to 224 to 240 (KRLFNVPTTTDTKKPRC).

The protein belongs to the EMP24/GP25L family.

The protein localises to the endoplasmic reticulum membrane. This chain is Transmembrane emp24 domain-containing protein 6 (TMED6), found in Homo sapiens (Human).